The chain runs to 559 residues: Polypeptide N-acetylgalactosaminyltransferase 1 (559 aa).

Topologically, residues 1 to 8 are cytoplasmic; it reads MRKFAYCK. The chain crosses the membrane as a helical; Signal-anchor for type II membrane protein span at residues 9–28; it reads VVLATSLIWVLLDMFLLLYF. At 29–559 the chain is on the lumenal side; it reads SECNKCDEKK…LRNVTLPEIF (531 aa). The tract at residues 45 to 66 is disordered; it reads GDVLEPVQKPHEGPGEMGKPVV. N95 is a glycosylation site (N-linked (GlcNAc...) asparagine). 5 cysteine pairs are disulfide-bonded: C106-C339, C330-C408, C442-C459, C482-C497, and C523-C540. Residues 115–225 form a catalytic subdomain A region; sequence LPTTSVVIVF…VGWLEPLLAR (111 aa). Residues D156 and R186 each coordinate substrate. Mn(2+) is bound by residues D209 and H211. The interval 285–347 is catalytic subdomain B; the sequence is PVRTPTMAGG…TCSHVGHVFR (63 aa). W316 provides a ligand contact to substrate. H344 lines the Mn(2+) pocket. Residues R347 and Y352 each contribute to the substrate site. Residues 429-551 form the Ricin B-type lectin domain; that stretch reads SSLGEIRNVE…GSRSQQWLLR (123 aa). N552 carries an N-linked (GlcNAc...) asparagine glycan.

The protein belongs to the glycosyltransferase 2 family. GalNAc-T subfamily. The cofactor is Mn(2+).

The protein localises to the golgi apparatus. The protein resides in the golgi stack membrane. It localises to the secreted. The catalysed reaction is L-seryl-[protein] + UDP-N-acetyl-alpha-D-galactosamine = a 3-O-[N-acetyl-alpha-D-galactosaminyl]-L-seryl-[protein] + UDP + H(+). It carries out the reaction L-threonyl-[protein] + UDP-N-acetyl-alpha-D-galactosamine = a 3-O-[N-acetyl-alpha-D-galactosaminyl]-L-threonyl-[protein] + UDP + H(+). The protein operates within protein modification; protein glycosylation. In terms of biological role, catalyzes the initial reaction in O-linked oligosaccharide biosynthesis, the transfer of an N-acetyl-D-galactosamine residue to a serine or threonine residue on the protein receptor. Has a broad spectrum of substrates such as apomucin-, MUC5AC-, MUC1- and MUC2-derived peptides. The sequence is that of Polypeptide N-acetylgalactosaminyltransferase 1 from Sus scrofa (Pig).